A 410-amino-acid polypeptide reads, in one-letter code: Magnesium transporter NIPA3 (410 aa).

The Extracellular portion of the chain corresponds to 1-67 (MGAQVRLPPG…ISANVENKYS (67 aa)). Residues asparagine 25, asparagine 35, and asparagine 50 are each glycosylated (N-linked (GlcNAc...) asparagine). A helical transmembrane segment spans residues 68 to 88 (LYVGLVLAVSSSIFIGSSFIL). Residues 89-114 (KKKGLLQLASKGITRAGQGGHSYLKE) lie on the Cytoplasmic side of the membrane. A helical membrane pass occupies residues 115 to 135 (WLWWVGLLSMGVGEAANFAAY). A topological domain (extracellular) is located at residue alanine 136. Residues 137-157 (FAPATLVTPLGALSVLISAIL) form a helical membrane-spanning segment. Over 158 to 165 (SSYFLNEH) the chain is Cytoplasmic. A helical transmembrane segment spans residues 166-186 (LNIHGKIGCILSILGSTVMVI). Topologically, residues 187-207 (HAPQEEEVTSLHEMEMKLRDP) are extracellular. Residues 208 to 228 (GFISFAVIVTVISLVLILIVA) traverse the membrane as a helical segment. Residues 229-233 (PKKGQ) lie on the Cytoplasmic side of the membrane. Residues 234–254 (TNILVYISICSLIGAFSVSSV) traverse the membrane as a helical segment. The Extracellular segment spans residues 255-273 (KGLGIAIKELIEWKPVYKH). A helical transmembrane segment spans residues 274–294 (PLVFVLLAVLVLSVTTQINYL). Over 295–304 (NKALDTFNTS) the chain is Cytoplasmic. The helical transmembrane segment at 305 to 325 (IVTPIYYVFFTSMVVTCSAIL) threads the bilayer. Residues 326 to 336 (FQEWYGMTAGD) are Extracellular-facing. A helical transmembrane segment spans residues 337 to 357 (IIGTLSGFFTIIIGIFLLHAF). Residues 358 to 410 (KNTDITWSELTSTAKKEAVSLNVSENNYVLLENLECSAPGYNDDVTLFSRTDD) lie on the Cytoplasmic side of the membrane.

This sequence belongs to the NIPA family.

It localises to the golgi apparatus membrane. The enzyme catalyses Mg(2+)(in) = Mg(2+)(out). Functionally, acts as a Mg(2+) transporter. Can also transport other divalent cations such as Fe(2+), Sr(2+), Ba(2+), Mn(2+), Cu(2+) and Co(2+) but to a much less extent than Mg(2+). This Pongo abelii (Sumatran orangutan) protein is Magnesium transporter NIPA3 (NIPAL1).